The chain runs to 171 residues: Synaptonemal complex central element protein 2 (171 aa).

Residues 1-52 (MERHGVAAPPVELKDQEPPAIVESGEHRQSENHEETPGSVAPSASCQLPGPF) are disordered. Over residues 24-36 (SGEHRQSENHEET) the composition is skewed to basic and acidic residues. Coiled-coil stretches lie at residues 52–83 (FSSL…DHAL) and 118–146 (QERL…QTVE).

It belongs to the SYCE family. Homodimer. Found in a complex with SYCP1 and SYCE1. Interacts with SYCP1 and SYCE1. Interacts with SYCE3. Interacts with TEX12. Meiotic cells (at protein level). Expressed in the ovary and testis.

The protein resides in the nucleus. The protein localises to the chromosome. Its function is as follows. Major component of the transverse central element of synaptonemal complexes (SCS), formed between homologous chromosomes during meiotic prophase. Requires SYCP1 in order to be incorporated into the central element. May have a role in the synaptonemal complex assembly, stabilization and recombination. The protein is Synaptonemal complex central element protein 2 (Syce2) of Mus musculus (Mouse).